A 127-amino-acid chain; its full sequence is Ribosome-binding factor A (127 aa).

This sequence belongs to the RbfA family. Monomer. Binds 30S ribosomal subunits, but not 50S ribosomal subunits or 70S ribosomes.

The protein localises to the cytoplasm. Its function is as follows. One of several proteins that assist in the late maturation steps of the functional core of the 30S ribosomal subunit. Associates with free 30S ribosomal subunits (but not with 30S subunits that are part of 70S ribosomes or polysomes). Required for efficient processing of 16S rRNA. May interact with the 5'-terminal helix region of 16S rRNA. This Chloroflexus aggregans (strain MD-66 / DSM 9485) protein is Ribosome-binding factor A.